The following is a 484-amino-acid chain: MKFIVKLYPEIMMKSKPVRMRFTKMLETNIRNVLKKVDEDAKVQRQWDRIWVKVPNDKPELAQAFGERLACIPGIAHVVQVDEYSFTSVDDIYQQVLPVYRDQIAGKTFCVRVKRTGSHDFNSIEVERYVGGGLNQFTDAVGVRLKNPEVTVNLEIEGDKLYMVTKRIEGLGGFPMATQEDVLSLISGGFDSGVSSYQFIKKGARTHYCFFNLGGAQHEIGVKQVAYHLWKTYGESHKVKFVSVPFEPVVAEILEKIDNGQMGVVLKRMMMRTAARIAERMGIQAIVTGESLGQVSSQTLTNLNVIDRCTDMLILRPLIAMDKQDIINECRRIGTEDFAKSMPEYCGVISQKPTVKAVLAKVEAEETKFSEDLIDRIVEQAVAIDIREIAEQMNTRITETETVVAIDTNEVVIDIRAPEEEENKPLEIEGVEIKRIPFFKLATQFADLDKQKTYLLYCERGVMSKLQALYLIEQGYHNVKVYRP.

The THUMP domain occupies 63–167 (QAFGERLACI…GDKLYMVTKR (105 aa)). ATP contacts are provided by residues 185–186 (LI), K267, G289, and Q298. A disulfide bridge connects residues C346 and C458. A Rhodanese domain is found at 406–484 (IDTNEVVIDI…GYHNVKVYRP (79 aa)). C458 acts as the Cysteine persulfide intermediate in catalysis.

It belongs to the ThiI family.

It localises to the cytoplasm. The enzyme catalyses [ThiI sulfur-carrier protein]-S-sulfanyl-L-cysteine + a uridine in tRNA + 2 reduced [2Fe-2S]-[ferredoxin] + ATP + H(+) = [ThiI sulfur-carrier protein]-L-cysteine + a 4-thiouridine in tRNA + 2 oxidized [2Fe-2S]-[ferredoxin] + AMP + diphosphate. The catalysed reaction is [ThiS sulfur-carrier protein]-C-terminal Gly-Gly-AMP + S-sulfanyl-L-cysteinyl-[cysteine desulfurase] + AH2 = [ThiS sulfur-carrier protein]-C-terminal-Gly-aminoethanethioate + L-cysteinyl-[cysteine desulfurase] + A + AMP + 2 H(+). Its pathway is cofactor biosynthesis; thiamine diphosphate biosynthesis. In terms of biological role, catalyzes the ATP-dependent transfer of a sulfur to tRNA to produce 4-thiouridine in position 8 of tRNAs, which functions as a near-UV photosensor. Also catalyzes the transfer of sulfur to the sulfur carrier protein ThiS, forming ThiS-thiocarboxylate. This is a step in the synthesis of thiazole, in the thiamine biosynthesis pathway. The sulfur is donated as persulfide by IscS. The sequence is that of tRNA sulfurtransferase from Shewanella sp. (strain MR-7).